The following is a 1935-amino-acid chain: MGDGEMECFGPAAVYLRKTERERIEAQNTPFDAKTAFFVVDPDEMYLKGTLVSKEGGKATVKTHSGKTVTVKEDEIFPMNPPKFDKIEDMAMMTHLNEPAVLFNLKERYAAWMIYTYSGLFCVTVNPYKWLPVYDAVVVGGYRGKKRIEAPPHIFSISDNAYQFMLTDRENQSVLITGESGAGKTVNTKRVIQYFATVGAMSGPKKPEPVPGKMQGSLEDQIVAANPLLEAYGNAKTVRNDNSSRFGKFIRIHFGTTGKLASADIETYLLEKSRVTFQLSAERSYHIFYQLMTGHKPELLEALLITTNPYDYPMISQGEITVKSINDVEEFIATDTAIDILGFTADEKISIYKLTGAVMHHGNMKFKQKQREEQAEPDGTEVADKIAYLMGLNSADMLKALCFPRVKVGNEMVTKGQTVPQVNNAVSALSKSVYEKMFLWMVIRINEMLDTKQPRQFFIGVLDIAGFEIFDFNSLEQLCINFTNEKLQQFFNHHMFVLEQEEYKKEGIEWEFIDFGMDLAACIELIEKPMGIFSILEEECMFPKATDTSFKNKLHDQHLGKTAAFQKPKPAKGKAEAHFSLVHYAGTVDYNIVGWLDKNKDPLNDSVVQLYQKSSLKVLAFLYATHGAEAEGGGGKKGKKKGGSFQTVSALFRENLGKLMTNLRSTHPHFVRCLIPNESKTPGLMENYLVIHQLRCNGVLEGIRICRKGFPSRILYGDFKQRYKVLNASVIPEGQFIDNKKASEKLLGSIDVDHTQYKFGHTKVFFKAGLLGALEEMRDEKLALLVTMTQALCRGYVMRKEFVKMMERRESIYSIQYNIRSFMNVKHWPWMKLYFKIKPLLKSAETEKEMAAMKENYEKMKEDLTKALAKKKELEEKMVSLLQEKNDLQLQVTAESENLSDAEERCEGLIKSKIQLEAKLKETNERLEDEEEINAELTAKKRKLEDECSELKKDIDDLELTLAKVEKEKHATENKVKNLTEEMASQDESIAKLTKEKKALQEAHQQTLDDLQAEEDKVNTLTKAKTKLEQQVDDLEGSLEQEKKLRMDLERAKRKLEGDLKLAQESIMDLENEKQQSDEKIKKKDFEISQLLSKIEDEQSLGAQLQKKIKELQARIEELEEEIEAERAARAKVEKQRADLSRELEEISERLEEAGGATAAQIEMNKKREAEFQKMRRDLEESTLQHEATAAALRKEQADSVAELGEQIDNLQRVKQKLEKEKSEYKMEIDDLTSNMEAVAKAKANLEKMCRTLEDQLSEIKTKSDENVRQLNDMNAQRARLQTENGEFSRQLEEKEALVSQLTRGKQAYTQQIEELKRHIEEEVKAKNALAHAVQSARHDCDLLREQYEEEQEAKAELQRGMSKANSEVAQWRTKYETDAIQRTEELEEAKKKLAQRLQDAEESIEAVNSKCASLEKTKQRLQGEVEDLMIDVERANSLAANLDKKQRNFDKVLAEWKQKYEESQAELEGAQKEARSLSTELFKMKNSYEEALDHLETLKRENKNLQQEISDLTEQLGETGKSIHELEKAKKTVESEKSEIQTALEEAEGTLEHEESKILRVQLELNQVKSEIDRKLAEKDEEMEQIKRNSQRVIDSMQSTLDSEVRSRNDALRVKKKMEGDLNEMEIQLSHANRQAAEAQKQLRNVQGQLKDAQLHLDEAVRGQEDMKEQVAMVERRNSLMQAEIEELRAALEQTERGRKVAEQELVDASERVGLLHSQNTSLINTKKKLEADLVQVQGEVDDAVQEARNAEEKAKKAITDAAMMAEELKKEQDTSAHLERMKKNLEVTVKDLQHRLDEAESLAMKGGKKQLQKLESRVRELEAEVEAEQRRGADAVKGVRKYERRVKELTYQTEEDKKNVIRLQDLVDKLQLKVKVYKRQAEEAEEQTNTHLSRYRKVQHELEEAQERADVAESQVNKLRAKSRDAGKSKDEE.

The Myosin N-terminal SH3-like domain maps to 32–81 (DAKTAFFVVDPDEMYLKGTLVSKEGGKATVKTHSGKTVTVKEDEIFPMNP). The Myosin motor domain maps to 85-779 (DKIEDMAMMT…LLGALEEMRD (695 aa)). Lysine 129 bears the N6,N6,N6-trimethyllysine mark. 178–185 (GESGAGKT) contributes to the ATP binding site. Actin-binding stretches follow at residues 659 to 681 (LMTN…ESKT) and 761 to 775 (HTKV…GALE). The IQ domain maps to 782-811 (LALLVTMTQALCRGYVMRKEFVKMMERRES). The interval 812 to 839 (IYSIQYNIRSFMNVKHWPWMKLYFKIKP) is hinge. A coiled-coil region spans residues 840-1935 (LLKSAETEKE…RDAGKSKDEE (1096 aa)). Disordered stretches follow at residues 1589-1608 (RNSQ…EVRS) and 1902-1935 (HELE…KDEE). A compositionally biased stretch (polar residues) spans 1592–1603 (QRVIDSMQSTLD). Basic and acidic residues-rich tracts occupy residues 1902–1913 (HELEEAQERADV) and 1924–1935 (KSRDAGKSKDEE).

The protein belongs to the TRAFAC class myosin-kinesin ATPase superfamily. Myosin family. As to quaternary structure, muscle myosin is a hexameric protein that consists of 2 heavy chain subunits (MHC), 2 alkali light chain subunits (MLC) and 2 regulatory light chain subunits (MLC-2).

It localises to the cytoplasm. The protein resides in the myofibril. Muscle contraction. This chain is Myosin heavy chain, fast skeletal muscle, found in Cyprinus carpio (Common carp).